The following is a 391-amino-acid chain: 3-ketoacyl-CoA thiolase (391 aa).

Catalysis depends on Cys-95, which acts as the Acyl-thioester intermediate. Catalysis depends on proton acceptor residues His-347 and Cys-377.

Belongs to the thiolase-like superfamily. Thiolase family. As to quaternary structure, heterotetramer of two alpha chains (FadB) and two beta chains (FadA).

Its subcellular location is the cytoplasm. It catalyses the reaction an acyl-CoA + acetyl-CoA = a 3-oxoacyl-CoA + CoA. The protein operates within lipid metabolism; fatty acid beta-oxidation. Its function is as follows. Catalyzes the final step of fatty acid oxidation in which acetyl-CoA is released and the CoA ester of a fatty acid two carbons shorter is formed. The polypeptide is 3-ketoacyl-CoA thiolase (Pseudomonas fluorescens (strain ATCC BAA-477 / NRRL B-23932 / Pf-5)).